The sequence spans 89 residues: Small ribosomal subunit protein bS20 (89 aa).

Positions 1-21 (MANSAQAKKRARQNVKARKHN) are disordered. Residues 7–21 (AKKRARQNVKARKHN) are compositionally biased toward basic residues.

This sequence belongs to the bacterial ribosomal protein bS20 family.

Its function is as follows. Binds directly to 16S ribosomal RNA. The sequence is that of Small ribosomal subunit protein bS20 from Acinetobacter baylyi (strain ATCC 33305 / BD413 / ADP1).